A 763-amino-acid chain; its full sequence is Polyribonucleotide nucleotidyltransferase (763 aa).

Residues Asp-526 and Asp-532 each coordinate Mg(2+). Positions 592-651 constitute a KH domain; it reads PRITTIKVPVDKIGEVIGPKGKMINSITEETGAQISIEDDGTVFVGAADGLSAQAAIDKI. Positions 663–732 constitute an S1 motif domain; the sequence is GERFLGTVVK…NRGKISLVLV (70 aa). The tract at residues 739–763 is disordered; the sequence is SAESAGDKGAEKAEGAAADVTPAEA. Over residues 743–752 the composition is skewed to basic and acidic residues; it reads AGDKGAEKAE.

Belongs to the polyribonucleotide nucleotidyltransferase family. Requires Mg(2+) as cofactor.

It localises to the cytoplasm. It catalyses the reaction RNA(n+1) + phosphate = RNA(n) + a ribonucleoside 5'-diphosphate. Involved in mRNA degradation. Catalyzes the phosphorolysis of single-stranded polyribonucleotides processively in the 3'- to 5'-direction. The protein is Polyribonucleotide nucleotidyltransferase of Mycolicibacterium smegmatis (strain ATCC 700084 / mc(2)155) (Mycobacterium smegmatis).